A 92-amino-acid chain; its full sequence is Bombyxin A-4 (92 aa).

An N-terminal signal peptide occupies residues 1–19 (MKILLAIALMLSTVMWVST). The residue at position 20 (Gln20) is a Pyrrolidone carboxylic acid. 3 disulfides stabilise this stretch: Cys29/Cys79, Cys41/Cys92, and Cys78/Cys83. Residues 50 to 70 (SGAQFASYGSAWLMPYSEGRG) constitute a propeptide, c peptide like.

It belongs to the insulin family. Heterodimer of a B chain and an A chain linked by two disulfide bonds.

It is found in the secreted. Functionally, brain peptide responsible for activation of prothoracic glands to produce ecdysone in insects. This Bombyx mori (Silk moth) protein is Bombyxin A-4 (BBXA4).